A 244-amino-acid chain; its full sequence is MGQKINPVGFRLGVTQEHRSRWFADPNRYPQLLQEDKKIRDYVRKNLSNAGIADIRVERKADQVELEIRTARPGVVVGRGGAGIDTLREGLQALLKDSSRQIRINVIEVERVDADAALLGEYIAQQLERRVAFRRCVRQAIQRAQRAGVQGIKIQVAGRLNGAEIARTEWTREGRVPLHTLRADIDYAYTTATTTYGILGIKVWVFRGEIIPGQEDAAPSNVGQPRRRNQQRRRQQFEDRSNEG.

The KH type-2 domain occupies 39–110 (IRDYVRKNLS…QIRINVIEVE (72 aa)). Residues 215-244 (EDAAPSNVGQPRRRNQQRRRQQFEDRSNEG) are disordered. A compositionally biased stretch (basic residues) spans 225–234 (PRRRNQQRRR). Over residues 235–244 (QQFEDRSNEG) the composition is skewed to basic and acidic residues.

This sequence belongs to the universal ribosomal protein uS3 family. In terms of assembly, part of the 30S ribosomal subunit. Forms a tight complex with proteins S10 and S14.

Functionally, binds the lower part of the 30S subunit head. Binds mRNA in the 70S ribosome, positioning it for translation. The chain is Small ribosomal subunit protein uS3 from Synechococcus sp. (strain ATCC 27144 / PCC 6301 / SAUG 1402/1) (Anacystis nidulans).